A 118-amino-acid chain; its full sequence is DNA-directed RNA polymerase subunit omega (118 aa).

The segment at 78–104 is disordered; the sequence is DEPEEDSMAMLMGGGQPDKPAEDDMSE.

Belongs to the RNA polymerase subunit omega family. As to quaternary structure, the RNAP catalytic core consists of 2 alpha, 1 beta, 1 beta' and 1 omega subunit. When a sigma factor is associated with the core the holoenzyme is formed, which can initiate transcription.

The catalysed reaction is RNA(n) + a ribonucleoside 5'-triphosphate = RNA(n+1) + diphosphate. Promotes RNA polymerase assembly. Latches the N- and C-terminal regions of the beta' subunit thereby facilitating its interaction with the beta and alpha subunits. The sequence is that of DNA-directed RNA polymerase subunit omega from Dinoroseobacter shibae (strain DSM 16493 / NCIMB 14021 / DFL 12).